A 465-amino-acid polypeptide reads, in one-letter code: MTPPRKLHIKSYGCQMNVYDAQRMVDTLAPEGFVETASAEDADLVILNTCHIREKASEKVYSELGRLRVAKDEAARGGRAMQIAVAGCVAQAEGEEIVRRAPVVDVVVGPQSYHHLPELLKRAGNEGRAVETEFPAADKFGFLAQPKPDAIRARGISAFVTVQEGCDKFCTFCVVPYTRGAEVSRPVARIVDDVKRLADNGVRELTLIGQNVNAYHGDGPDGKSWPLGRLLEHLAGIPGIARLRYSTSHPRDVDDSLIAAHRDLAALMPFVHLPVQSGSDRILAAMNRKHTADDYRRVIDRFRAARQDIAFSSDFIVGFPGESEQDFLATLALVTQIGYAAAYSFKYSARPGTPAADMQETVSPAEMDQRLERLQELIDSQQSAFNKAAIGSTVDVLFERPARKDGQIVGRTAFLQPAHVMASPGIIGQILPVRIDSLERYSFLGELVTPRVAREPALSPIATGA.

The MTTase N-terminal domain maps to 5–125 (RKLHIKSYGC…LPELLKRAGN (121 aa)). Residues Cys14, Cys50, Cys88, Cys166, Cys170, and Cys173 each contribute to the [4Fe-4S] cluster site. In terms of domain architecture, Radical SAM core spans 152 to 384 (RARGISAFVT…QELIDSQQSA (233 aa)). The region spanning 387–449 (KAAIGSTVDV…RYSFLGELVT (63 aa)) is the TRAM domain.

It belongs to the methylthiotransferase family. MiaB subfamily. Monomer. [4Fe-4S] cluster is required as a cofactor.

The protein localises to the cytoplasm. It catalyses the reaction N(6)-dimethylallyladenosine(37) in tRNA + (sulfur carrier)-SH + AH2 + 2 S-adenosyl-L-methionine = 2-methylsulfanyl-N(6)-dimethylallyladenosine(37) in tRNA + (sulfur carrier)-H + 5'-deoxyadenosine + L-methionine + A + S-adenosyl-L-homocysteine + 2 H(+). Its function is as follows. Catalyzes the methylthiolation of N6-(dimethylallyl)adenosine (i(6)A), leading to the formation of 2-methylthio-N6-(dimethylallyl)adenosine (ms(2)i(6)A) at position 37 in tRNAs that read codons beginning with uridine. The chain is tRNA-2-methylthio-N(6)-dimethylallyladenosine synthase from Bradyrhizobium diazoefficiens (strain JCM 10833 / BCRC 13528 / IAM 13628 / NBRC 14792 / USDA 110).